Reading from the N-terminus, the 672-residue chain is UvrABC system protein B (672 aa).

The Helicase ATP-binding domain maps to 26–181 (AGLEDGLAYQ…ILQRLAELQY (156 aa)). Residue 39–46 (GVTGSGKT) coordinates ATP. The short motif at 92–115 (YYDYYQPEAYVPSSDTYIEKDASI) is the Beta-hairpin element. In terms of domain architecture, Helicase C-terminal spans 430–592 (QVDDLLSEIK…ITPKSIQKAV (163 aa)). One can recognise a UVR domain in the interval 631 to 666 (AKELRKLEEQMYHHARNLEFEEAAAVRDKIQHIRKG).

This sequence belongs to the UvrB family. As to quaternary structure, forms a heterotetramer with UvrA during the search for lesions. Interacts with UvrC in an incision complex.

It localises to the cytoplasm. The UvrABC repair system catalyzes the recognition and processing of DNA lesions. A damage recognition complex composed of 2 UvrA and 2 UvrB subunits scans DNA for abnormalities. Upon binding of the UvrA(2)B(2) complex to a putative damaged site, the DNA wraps around one UvrB monomer. DNA wrap is dependent on ATP binding by UvrB and probably causes local melting of the DNA helix, facilitating insertion of UvrB beta-hairpin between the DNA strands. Then UvrB probes one DNA strand for the presence of a lesion. If a lesion is found the UvrA subunits dissociate and the UvrB-DNA preincision complex is formed. This complex is subsequently bound by UvrC and the second UvrB is released. If no lesion is found, the DNA wraps around the other UvrB subunit that will check the other stand for damage. In Coxiella burnetii (strain CbuK_Q154) (Coxiella burnetii (strain Q154)), this protein is UvrABC system protein B.